We begin with the raw amino-acid sequence, 225 residues long: UPF0758 protein BB3258 (225 aa).

In terms of domain architecture, MPN spans 103–225 (ALANPDLVRR…TVSMAAQGHL (123 aa)). His-174, His-176, and Asp-187 together coordinate Zn(2+). The JAMM motif motif lies at 174–187 (HNHPGGTAAASAAD).

It belongs to the UPF0758 family.

The chain is UPF0758 protein BB3258 from Bordetella bronchiseptica (strain ATCC BAA-588 / NCTC 13252 / RB50) (Alcaligenes bronchisepticus).